A 202-amino-acid chain; its full sequence is Glycolipid transfer protein 1 (202 aa).

A ganglioside GM3 (d18:1(4E)) contacts are provided by aspartate 52, asparagine 56, tryptophan 99, and histidine 138.

The protein belongs to the GLTP family.

Its function is as follows. May be involved in glycolipids transfer. The chain is Glycolipid transfer protein 1 from Arabidopsis thaliana (Mouse-ear cress).